A 513-amino-acid polypeptide reads, in one-letter code: Maturase K (513 aa).

It belongs to the intron maturase 2 family. MatK subfamily.

It localises to the plastid. The protein resides in the chloroplast. Usually encoded in the trnK tRNA gene intron. Probably assists in splicing its own and other chloroplast group II introns. In Byblis liniflora (Carnivorous plant), this protein is Maturase K.